An 879-amino-acid chain; its full sequence is Protein translocase subunit SecA (879 aa).

ATP is bound by residues Q86, 104–108 (GEGKT), and D500. Zn(2+) contacts are provided by C863, C865, C874, and H875.

The protein belongs to the SecA family. As to quaternary structure, monomer and homodimer. Part of the essential Sec protein translocation apparatus which comprises SecA, SecYEG and auxiliary proteins SecDF-YajC and YidC. Requires Zn(2+) as cofactor.

Its subcellular location is the cell inner membrane. It localises to the cytoplasm. It carries out the reaction ATP + H2O + cellular proteinSide 1 = ADP + phosphate + cellular proteinSide 2.. Part of the Sec protein translocase complex. Interacts with the SecYEG preprotein conducting channel. Has a central role in coupling the hydrolysis of ATP to the transfer of proteins into and across the cell membrane, serving both as a receptor for the preprotein-SecB complex and as an ATP-driven molecular motor driving the stepwise translocation of polypeptide chains across the membrane. This chain is Protein translocase subunit SecA, found in Orientia tsutsugamushi (strain Ikeda) (Rickettsia tsutsugamushi).